The chain runs to 1173 residues: PR domain zinc finger protein 10 (1173 aa).

The interval 146-211 is disordered; that stretch reads RLPPMEGADS…AEPPRPFDPN (66 aa). Residues 154-167 show a composition bias toward polar residues; sequence DSSTTINSLPSPNA. Positions 172–202 are enriched in acidic residues; the sequence is KEDDDDDDDDDDDEEEEDDDGEDSDLDDWEA. Residues 248–366 form the SET domain; it reads LPLVLYIDRF…PKQELKVWYA (119 aa). Residues 267–371 form an N-terminal PR domain; essential for transcriptional activator activity region; sequence IPKRTQFGPL…KVWYAASYAE (105 aa). Residues 395 to 417 form a C2H2-type 1 zinc finger; it reads WPCYECNRRFMSSEQLQQHLNSH. Over residues 430-447 the composition is skewed to basic residues; that stretch reads RGRTRTRRKFGPGRRPGR. The segment at 430–451 is disordered; that stretch reads RGRTRTRRKFGPGRRPGRPPKF. 9 C2H2-type zinc fingers span residues 559–581, 589–611, 617–639, 645–668, 673–695, 701–724, 756–779, 801–824, and 863–886; these read FKCL…LRFH, LTCD…MKFH, YSCI…VVVH, FSCP…RSFH, YQCT…MLRH, FLCS…QRMH, FKCR…SKRH, YYCQ…LKNH, and VCCP…RKKH. The C-terminal glutamine-rich region; essential for transcriptional activator activity stretch occupies residues 926-1153; the sequence is QAMTELSQTL…PASNSSQTTQ (228 aa). Disordered regions lie at residues 1014–1056 and 1125–1173; these read PTSG…ANSA and KKSS…ISKP. A compositionally biased stretch (low complexity) spans 1150–1160; sequence QTTQYIITTTT. Over residues 1161–1173 the composition is skewed to polar residues; that stretch reads NMNGSSEVHISKP.

This sequence belongs to the class V-like SAM-binding methyltransferase superfamily.

Its subcellular location is the nucleus. Functionally, transcriptional activator, essential for early embryonic development and survival of embryonic stem cells (ESCs). Supports cell growth and survival during early development by transcriptionally activating the expression of the translation initiation factor EIF3B, to sustain global translation. Activates the transcription of FLNC. This Xenopus tropicalis (Western clawed frog) protein is PR domain zinc finger protein 10 (prdm10).